We begin with the raw amino-acid sequence, 1399 residues long: Meiosis-specific protein ASY2 (1399 aa).

The 239-residue stretch at Gln10–Val248 folds into the HORMA domain. Positions Pro257–Gln266 are enriched in acidic residues. Disordered regions lie at residues Pro257–Gln281, Ser487–Pro525, Arg617–Glu656, Pro940–Val974, and Asp1045–Lys1090. Basic and acidic residues predominate over residues Asp267–Gln281. Positions Ser509–Ser523 are enriched in pro residues. Polar residues predominate over residues Arg617 to Ser631. Positions Met1205–Ala1246 form a coiled coil.

It is found in the chromosome. It localises to the nucleus. Functionally, required for normal meiosis. The sequence is that of Meiosis-specific protein ASY2 from Arabidopsis thaliana (Mouse-ear cress).